The sequence spans 367 residues: AA9 family lytic polysaccharide monooxygenase A (367 aa).

An N-terminal signal peptide occupies residues 1-20; that stretch reads MKSSTFGMLALAAAAKLVSA. A Cu(2+)-binding site is contributed by His-21. Positions 37–56 are disordered; the sequence is GNSESGYIRSPPSNSPITDV. Cys-63 and Cys-183 are disulfide-bonded. Position 102 (His-102) interacts with Cu(2+). His-169 is an O2 binding site. Tyr-180 contacts Cu(2+). Residues 234–287 are disordered; the sequence is GASGSSSSPSASASASAPAATSAAPAPSSFTTIAKQPATSSTEAPSTENTSTTS. Composition is skewed to low complexity over residues 235–262 and 270–287; these read ASGS…APSS and PATS…STTS. Asn-282 carries N-linked (GlcNAc...) asparagine glycosylation. The 37-residue stretch at 329–365 folds into the CBM1 domain; it reads GAVKEWYQCGGLNYKGSTQCEEGLTCKKWNPYYYQCI.

It belongs to the polysaccharide monooxygenase AA9 family. The cofactor is Cu(2+).

The protein localises to the secreted. The catalysed reaction is [(1-&gt;4)-beta-D-glucosyl]n+m + reduced acceptor + O2 = 4-dehydro-beta-D-glucosyl-[(1-&gt;4)-beta-D-glucosyl]n-1 + [(1-&gt;4)-beta-D-glucosyl]m + acceptor + H2O.. In terms of biological role, lytic polysaccharide monooxygenase (LPMO) that depolymerizes crystalline and amorphous polysaccharides via the oxidation of scissile alpha- or beta-(1-4)-glycosidic bonds, yielding C4 oxidation products. Catalysis by LPMOs requires the reduction of the active-site copper from Cu(II) to Cu(I) by a reducing agent and H(2)O(2) or O(2) as a cosubstrate. Active on cellulose and cello-oligosaccharides, as well as plant cell wall-derived hemicellulosic polysaccharides. Also active on cello-oligosaccharides such as cellohexaose, cellopentaose or cellotetraose. This chain is AA9 family lytic polysaccharide monooxygenase A, found in Aspergillus oryzae (strain ATCC 42149 / RIB 40) (Yellow koji mold).